Consider the following 378-residue polypeptide: Decaprenyl-diphosphate synthase subunit 1 (378 aa).

Isopentenyl diphosphate-binding residues include K72, R75, and H130. Mg(2+) contacts are provided by D137 and D141. R147 serves as a coordination point for isopentenyl diphosphate.

The protein belongs to the FPP/GGPP synthase family. In terms of assembly, heterotetramer of 2 dps1 and 2 dlp1 subunits. Mg(2+) serves as cofactor.

Its subcellular location is the mitochondrion. It carries out the reaction 7 isopentenyl diphosphate + (2E,6E)-farnesyl diphosphate = all-trans-decaprenyl diphosphate + 7 diphosphate. It participates in cofactor biosynthesis; ubiquinone biosynthesis. In terms of biological role, supplies decaprenyl diphosphate, the precursor for the side chain of the isoprenoid quinones ubiquinone-10. This is Decaprenyl-diphosphate synthase subunit 1 (dps1) from Schizosaccharomyces pombe (strain 972 / ATCC 24843) (Fission yeast).